The following is a 334-amino-acid chain: ATP-dependent kinase YFH7 (334 aa).

Residue Gly30–Thr38 participates in ATP binding.

The protein belongs to the YFH7 family.

ATP-dependent kinase that could be involved in endoplasmic reticulum membrane assembly. This Eremothecium gossypii (strain ATCC 10895 / CBS 109.51 / FGSC 9923 / NRRL Y-1056) (Yeast) protein is ATP-dependent kinase YFH7 (YFH7).